Reading from the N-terminus, the 314-residue chain is Ribosomal RNA small subunit methyltransferase H (314 aa).

S-adenosyl-L-methionine-binding positions include 40 to 42 (GGH), Asp60, Phe85, Asp107, and Gln114.

The protein belongs to the methyltransferase superfamily. RsmH family.

The protein resides in the cytoplasm. The catalysed reaction is cytidine(1402) in 16S rRNA + S-adenosyl-L-methionine = N(4)-methylcytidine(1402) in 16S rRNA + S-adenosyl-L-homocysteine + H(+). In terms of biological role, specifically methylates the N4 position of cytidine in position 1402 (C1402) of 16S rRNA. This Hydrogenovibrio crunogenus (strain DSM 25203 / XCL-2) (Thiomicrospira crunogena) protein is Ribosomal RNA small subunit methyltransferase H.